We begin with the raw amino-acid sequence, 136 residues long: Nucleoside diphosphate kinase (136 aa).

6 residues coordinate ATP: Lys-10, Phe-58, Arg-86, Thr-92, Arg-104, and Asn-114. The active-site Pros-phosphohistidine intermediate is the His-117.

This sequence belongs to the NDK family. As to quaternary structure, homotetramer. Mg(2+) serves as cofactor.

It is found in the cytoplasm. It carries out the reaction a 2'-deoxyribonucleoside 5'-diphosphate + ATP = a 2'-deoxyribonucleoside 5'-triphosphate + ADP. The catalysed reaction is a ribonucleoside 5'-diphosphate + ATP = a ribonucleoside 5'-triphosphate + ADP. Major role in the synthesis of nucleoside triphosphates other than ATP. The ATP gamma phosphate is transferred to the NDP beta phosphate via a ping-pong mechanism, using a phosphorylated active-site intermediate. In Mycolicibacterium paratuberculosis (strain ATCC BAA-968 / K-10) (Mycobacterium paratuberculosis), this protein is Nucleoside diphosphate kinase.